The primary structure comprises 255 residues: Cysteine protease avirulence protein AvrRpt2 (255 aa).

Residues 1 to 50 (MKIAPVAINHSPLSREVPSHAAPTQAKQTNLQSEAGDLDARKSSASSPET) are disordered. A propeptide spans 1 to 71 (MKIAPVAINH…RHKIEVPAFG (71 aa)) (removed in mature form). The tract at residues 70–71 (FG) is determinants of cleavage specificity. A disordered region spans residues 76 to 100 (KKSSKHETGGSSANADSSSVASDST). Over residues 86-98 (SSANADSSSVASD) the composition is skewed to low complexity. Residue cysteine 122 is the Nucleophile of the active site. Active-site residues include histidine 208 and aspartate 226.

This sequence belongs to the peptidase C70 family. In terms of assembly, interacts physically with plant cell ROC1 (Arabidopsis single-domain cyclophilin) and RIN4. In terms of processing, autocleaved inside plant cells upon activation by cyclophilin. Cleavage is crucial in subcellular location and in eliciting HR. Inhibited by cyclosporin A (cyclophilin inhibitor).

Its subcellular location is the secreted. It localises to the host cell membrane. Effector protein involved in gene-for-gene resistance in plants expressing RPS2. Its thiol protease activity is required for the degradation of plant cell RIN4 and consequent activation of RPS2 during bacterial infection. The activation of RPS2 is sufficient for the induction of hypersensitive response (HR) and plant resistance. Cleavage of RIN4 by AvrRpt2 also interferes with RPM1-mediated resistance activated by either AvrRpm1 or AvrB. Contributes to virulence in plants lacking the resistance protein RPS2 promoting pathogen growth and disease symptoms. Inhibits PAMP (pathogen-associated molecular patterns)-induced signaling compromising the host's basal defense system. Blocks plant callose deposition, flg22 (a peptide corresponding to the most conserved domain of flagellin) induced accumulation of PR-1, PR-2 and PR-5 and activation of GST6 transcription. The mechanism of virulence is unknown, but this activity is independent of ethylene and salicylic acid response pathways and independent of RIN4 disappearance. This is Cysteine protease avirulence protein AvrRpt2 (avrRpt2) from Pseudomonas syringae pv. tomato.